Reading from the N-terminus, the 291-residue chain is tRNA pseudouridine synthase-like 1 (291 aa).

Catalysis depends on D66, which acts as the Nucleophile. Y130 is a binding site for substrate.

Belongs to the tRNA pseudouridine synthase TruA family.

The enzyme catalyses a uridine in tRNA = a pseudouridine in tRNA. This is tRNA pseudouridine synthase-like 1 (Pusl1) from Mus musculus (Mouse).